Consider the following 310-residue polypeptide: ATP-dependent protease (310 aa).

The Integrase catalytic domain maps to 24–186; that stretch reads RLNQCFFKFK…TPNQKEENYF (163 aa).

The polypeptide is ATP-dependent protease (Lactococcus lactis subsp. lactis (Streptococcus lactis)).